Consider the following 313-residue polypeptide: Ribosomal RNA small subunit methyltransferase H (313 aa).

S-adenosyl-L-methionine-binding positions include 48–50 (GGH), aspartate 68, phenylalanine 102, aspartate 120, and glutamine 127. Positions 290-313 (TATEEEIDRNPRSRSAKLRAAARK) are disordered. A compositionally biased stretch (basic residues) spans 301–313 (RSRSAKLRAAARK).

It belongs to the methyltransferase superfamily. RsmH family.

Its subcellular location is the cytoplasm. The catalysed reaction is cytidine(1402) in 16S rRNA + S-adenosyl-L-methionine = N(4)-methylcytidine(1402) in 16S rRNA + S-adenosyl-L-homocysteine + H(+). Its function is as follows. Specifically methylates the N4 position of cytidine in position 1402 (C1402) of 16S rRNA. The polypeptide is Ribosomal RNA small subunit methyltransferase H (Koribacter versatilis (strain Ellin345)).